A 143-amino-acid chain; its full sequence is Transcriptional regulator MraZ (143 aa).

2 consecutive SpoVT-AbrB domains span residues 5 to 47 (TYTP…PRAA) and 76 to 119 (TDEQ…DAQA).

Belongs to the MraZ family. As to quaternary structure, forms oligomers.

The protein localises to the cytoplasm. It localises to the nucleoid. This is Transcriptional regulator MraZ from Mycobacterium bovis (strain ATCC BAA-935 / AF2122/97).